A 404-amino-acid chain; its full sequence is Beta-ketoacyl-[acyl-carrier-protein] synthase III, chloroplastic (404 aa).

Residues 1–43 (MANASGFFTHPSIPNLRSRIHVPVRVSGSGFCVSNRFSKRVLC) constitute a chloroplast transit peptide. Active-site residues include Cys-179, His-330, and Asn-360.

Belongs to the thiolase-like superfamily. FabH family.

It is found in the plastid. Its subcellular location is the chloroplast. It carries out the reaction malonyl-[ACP] + acetyl-CoA + H(+) = 3-oxobutanoyl-[ACP] + CO2 + CoA. It functions in the pathway lipid metabolism; fatty acid biosynthesis. Its function is as follows. Catalyzes the condensation reaction of fatty acid synthesis by the addition to an acyl acceptor of two carbons from malonyl-ACP. KAS III catalyzes the first condensation reaction which initiates fatty acid synthesis and may therefore play a role in governing the total rate of fatty acid production. Possesses both acetoacetyl-ACP synthase and acetyl transacylase activities. The chain is Beta-ketoacyl-[acyl-carrier-protein] synthase III, chloroplastic from Arabidopsis thaliana (Mouse-ear cress).